The primary structure comprises 268 residues: HTH-type transcriptional activator RhaS (268 aa).

Positions 171–268 constitute an HTH araC/xylS-type domain; that stretch reads RQMIRWLENN…YSIAPRELRI (98 aa). 2 consecutive DNA-binding regions (H-T-H motif) follow at residues 188–209 and 236–259; these read EELA…KSQT and IINI…KNEY.

As to quaternary structure, binds DNA as a dimer.

The protein resides in the cytoplasm. Activates expression of the rhaBAD and rhaT operons. The sequence is that of HTH-type transcriptional activator RhaS from Mannheimia succiniciproducens (strain KCTC 0769BP / MBEL55E).